The chain runs to 429 residues: Septin-8 (429 aa).

A compositionally biased stretch (basic and acidic residues) spans 1–16 (MAATDLERVSNAEPEP). The interval 1 to 23 (MAATDLERVSNAEPEPRSLSLGG) is disordered. N-acetylalanine is present on A2. S10 is subject to Phosphoserine. A Septin-type G domain is found at 41 to 307 (QGFSFNILCV…ELYRRCKLEE (267 aa)). Positions 51 to 58 (GETGIGKS) are G1 motif. GTP contacts are provided by residues 51 to 58 (GETGIGKS), G106, 187 to 195 (KADTISKSE), G241, and R256. The tract at residues 103-106 (DAVG) is G3 motif. The interval 186 to 189 (AKAD) is G4 motif. Residues 320-412 (FSLQETYEAK…AAMEALQSQA (93 aa)) adopt a coiled-coil conformation. A compositionally biased stretch (polar residues) spans 409 to 420 (QSQALHATSQQP). The segment at 409–429 (QSQALHATSQQPLRKDKDKKN) is disordered.

Belongs to the TRAFAC class TrmE-Era-EngA-EngB-Septin-like GTPase superfamily. Septin GTPase family. As to quaternary structure, septins polymerize into heterooligomeric protein complexes that form filaments, and can associate with cellular membranes, actin filaments and microtubules. GTPase activity is required for filament formation. Interacts with SEPTIN5. Interacts with CDK14, SEPTIN4 and SEPTIN7. Interacts with VAMP2; the interaction inhibits interaction of VAMP2 with SYP. Interacts with STX1A.

Its subcellular location is the cytoplasm. The protein resides in the cytoskeleton. It is found in the synapse. It localises to the cell projection. The protein localises to the axon. Its subcellular location is the cytoplasmic vesicle. The protein resides in the secretory vesicle. It is found in the synaptic vesicle membrane. It localises to the presynapse. In terms of biological role, filament-forming cytoskeletal GTPase. May play a role in platelet secretion. Seems to participate in the process of SNARE complex formation in synaptic vesicles. This is Septin-8 from Mus musculus (Mouse).